Consider the following 64-residue polypeptide: U6-theraphotoxin-Cg1a (64 aa).

A signal peptide spans 1–20 (MTRKILAVLLVFTLVACNNA). The propeptide occupies 21–38 (EKYSETDVEDSPMIQERR). 3 disulfide bridges follow: Cys-39–Cys-55, Cys-46–Cys-58, and Cys-54–Cys-63.

It belongs to the neurotoxin 36 family. 02 subfamily. In terms of tissue distribution, expressed by the venom gland.

The protein resides in the secreted. In terms of biological role, probable ion channel inhibitor. The sequence is that of U6-theraphotoxin-Cg1a from Chilobrachys guangxiensis (Chinese earth tiger tarantula).